The primary structure comprises 129 residues: Virion-associated protein (129 aa).

Coiled coils occupy residues 1-31 (MANLNQIQKEVSEILSDQKSMKADIKAILEL) and 38-59 (IKESLETVAAKIVNDLTKLIND). Residues 122-129 (PAGWPNQF) are capsid binding.

This sequence belongs to the caulimovirus ORF III family. Homotetramer, through coiled-coil domain. Homotrimer when bound on icosehadral capsid. Interacts with capsid protein, and with movement protein.

Its subcellular location is the virion. The protein localises to the host cell junction. It is found in the host plasmodesma. Its function is as follows. Plays a role in virus cell-to-cell and plant-to-plant transmission. Interacts with virion icosahedral capsid and movement protein, thereby facilitating virion cell-to-cell transmission through plasmodesmata opened by viral movement protein. Also interacts with aphid transmission factor, attaching the virion to aphid stylet when the animal feeds on an virus infected plant. Aphid saliva may later detach the virion, inducing release of infectious particles when the animal feeds on a new plant. The polypeptide is Virion-associated protein (Cauliflower mosaic virus (strain Strasbourg) (CaMV)).